We begin with the raw amino-acid sequence, 428 residues long: ATP phosphoribosyltransferase regulatory subunit (428 aa).

This sequence belongs to the class-II aminoacyl-tRNA synthetase family. HisZ subfamily. Heteromultimer composed of HisG and HisZ subunits.

It localises to the cytoplasm. It participates in amino-acid biosynthesis; L-histidine biosynthesis; L-histidine from 5-phospho-alpha-D-ribose 1-diphosphate: step 1/9. Functionally, required for the first step of histidine biosynthesis. May allow the feedback regulation of ATP phosphoribosyltransferase activity by histidine. In Syntrophotalea carbinolica (strain DSM 2380 / NBRC 103641 / GraBd1) (Pelobacter carbinolicus), this protein is ATP phosphoribosyltransferase regulatory subunit.